The chain runs to 103 residues: UPF0145 protein BT9727_3206 (103 aa).

The protein belongs to the UPF0145 family.

The sequence is that of UPF0145 protein BT9727_3206 from Bacillus thuringiensis subsp. konkukian (strain 97-27).